The following is a 647-amino-acid chain: ATP-dependent zinc metalloprotease FtsH (647 aa).

Positions 1 to 33 (MARKSDEDTNPMDKFMDRLRGSPGDGGPGRPDP) are disordered. The Cytoplasmic portion of the chain corresponds to 1 to 39 (MARKSDEDTNPMDKFMDRLRGSPGDGGPGRPDPSQRKVH). The helical transmembrane segment at 40–60 (FSIWYFILALLLIVWMQTYMG) threads the bilayer. Residues 61-134 (EQQSEKISYS…RFSGDVQNPW (74 aa)) are Periplasmic-facing. Residues 135–155 (LGLITWWLLPFAIMIFFWSFL) traverse the membrane as a helical segment. Over 156 to 647 (MRRMGGGPQG…DPVQVEGGAA (492 aa)) the chain is Cytoplasmic. Position 227-234 (227-234 (GAPGTGKT)) interacts with ATP. H449 provides a ligand contact to Zn(2+). The active site involves E450. Residues H453 and D526 each coordinate Zn(2+).

This sequence in the central section; belongs to the AAA ATPase family. In the C-terminal section; belongs to the peptidase M41 family. As to quaternary structure, homohexamer. Requires Zn(2+) as cofactor.

It is found in the cell inner membrane. Functionally, acts as a processive, ATP-dependent zinc metallopeptidase for both cytoplasmic and membrane proteins. Plays a role in the quality control of integral membrane proteins. The sequence is that of ATP-dependent zinc metalloprotease FtsH from Syntrophobacter fumaroxidans (strain DSM 10017 / MPOB).